A 657-amino-acid polypeptide reads, in one-letter code: Probable Xaa-Pro aminopeptidase P (657 aa).

4 residues coordinate Mn(2+): aspartate 453, aspartate 464, glutamate 562, and glutamate 576.

This sequence belongs to the peptidase M24B family. It depends on Mn(2+) as a cofactor.

It catalyses the reaction Release of any N-terminal amino acid, including proline, that is linked to proline, even from a dipeptide or tripeptide.. Functionally, catalyzes the removal of a penultimate prolyl residue from the N-termini of peptides. The sequence is that of Probable Xaa-Pro aminopeptidase P (ampp) from Talaromyces marneffei (strain ATCC 18224 / CBS 334.59 / QM 7333) (Penicillium marneffei).